The sequence spans 562 residues: Protein wntless (562 aa).

At 1–13 (MSGTILENLSGRK) the chain is on the cytoplasmic side. Residues 14-34 (LSILVASLLLCQVFCFLLGGL) form a helical membrane-spanning segment. Over 35-239 (YAPLPAGHVT…AIHQNGGFTQ (205 aa)) the chain is Lumenal. An N-linked (GlcNAc...) asparagine glycan is attached at Asn-58. Residues 240-260 (IWLMLKTVLFPFVVGIMIWFW) form a helical membrane-spanning segment. At 261–270 (RRVHLLQRSP) the chain is on the cytoplasmic side. The helical transmembrane segment at 271-291 (ALLEYMLIYLGGALTFLNLPL) threads the bilayer. Residues 292–311 (EYLSLVVEMPYMLLLSDIRQ) are Lumenal-facing. A helical transmembrane segment spans residues 312–332 (GIFYAMLLSFWLVFAGEHMLI). Topologically, residues 333–344 (QDAPNKSTIRSR) are cytoplasmic. Residues 345–365 (YWKHLSAVVVGCISLFVFDIC) traverse the membrane as a helical segment. Residues 366–390 (ERGVQLRNPFYSIWTTPLGAKVAMT) lie on the Lumenal side of the membrane. The helical transmembrane segment at 391–411 (FIILAGVSAAIYFLFLCYMIW) threads the bilayer. Residues 412 to 441 (KVFRNIGDKRTSLPSMSQARRLHYEGLIYR) are Cytoplasmic-facing. The helical transmembrane segment at 442-462 (FKFLMLATLLCAALTVAGFIM) threads the bilayer. Residues 463-482 (GQMAEGQWQWNDNVEIQLTS) are Lumenal-facing. The helical transmembrane segment at 483–503 (AFLTGVYGMWNIYIFALLILY) threads the bilayer. The Cytoplasmic segment spans residues 504–562 (APSHKQWPTMHHSDETTQSNENIVASAASEEIEFSHLPSDSNPSEISSLTSFTRKVAFD). Residues 539 to 562 (HLPSDSNPSEISSLTSFTRKVAFD) are disordered. Residues 541–556 (PSDSNPSEISSLTSFT) show a composition bias toward polar residues.

The protein belongs to the wntless family. In terms of assembly, interacts with wg; in the Golgi. Interacts with Vps35, a component of the retromer complex; wls stability is regulated by Vps35.

Its subcellular location is the presynaptic cell membrane. It localises to the postsynaptic cell membrane. The protein resides in the cell membrane. It is found in the endoplasmic reticulum membrane. The protein localises to the endosome membrane. Its subcellular location is the golgi apparatus membrane. A segment polarity gene required for wingless (wg)-dependent patterning processes, acting in both wg-sending cells and wg-target cells. In non-neuronal cells wls directs wg secretion. The wls traffic loop encompasses the Golgi, the cell surface, an endocytic compartment and a retrograde route leading back to the Golgi, and involves clathrin-mediated endocytosis and the retromer complex (a conserved protein complex consisting of Vps35 and Vps26). In neuronal cells (the larval motorneuron NMJ), the wg signal moves across the synapse via the release of wls-containing exosome-like vesicles. Postsynaptic wls is required for the trafficking of fz2 through the fz2-interacting protein Grip. This is Protein wntless from Drosophila ananassae (Fruit fly).